The chain runs to 268 residues: Tryptophan synthase alpha chain (268 aa).

Catalysis depends on proton acceptor residues E49 and D60.

It belongs to the TrpA family. As to quaternary structure, tetramer of two alpha and two beta chains.

The enzyme catalyses (1S,2R)-1-C-(indol-3-yl)glycerol 3-phosphate + L-serine = D-glyceraldehyde 3-phosphate + L-tryptophan + H2O. The protein operates within amino-acid biosynthesis; L-tryptophan biosynthesis; L-tryptophan from chorismate: step 5/5. The alpha subunit is responsible for the aldol cleavage of indoleglycerol phosphate to indole and glyceraldehyde 3-phosphate. The protein is Tryptophan synthase alpha chain of Shigella boydii serotype 4 (strain Sb227).